The following is a 381-amino-acid chain: tRNA pseudouridine synthase D (381 aa).

The Nucleophile role is filled by Asp81. One can recognise a TRUD domain in the interval 160-335 (GMPNYFGSQR…TLGSRRFFWV (176 aa)).

This sequence belongs to the pseudouridine synthase TruD family.

It catalyses the reaction uridine(13) in tRNA = pseudouridine(13) in tRNA. Responsible for synthesis of pseudouridine from uracil-13 in transfer RNAs. This Helicobacter acinonychis (strain Sheeba) protein is tRNA pseudouridine synthase D.